The following is a 217-amino-acid chain: Putative oxidative stress regulator AosR (217 aa).

The CXXXC signature appears at 5 to 9; that stretch reads CGRRC. C5 and C9 are joined by a disulfide.

This sequence belongs to the AosR family.

In Mycobacterium leprae (strain TN), this protein is Putative oxidative stress regulator AosR.